The sequence spans 89 residues: Small ribosomal subunit protein uS15 (89 aa).

Belongs to the universal ribosomal protein uS15 family. In terms of assembly, part of the 30S ribosomal subunit. Forms a bridge to the 50S subunit in the 70S ribosome, contacting the 23S rRNA.

Functionally, one of the primary rRNA binding proteins, it binds directly to 16S rRNA where it helps nucleate assembly of the platform of the 30S subunit by binding and bridging several RNA helices of the 16S rRNA. Forms an intersubunit bridge (bridge B4) with the 23S rRNA of the 50S subunit in the ribosome. This is Small ribosomal subunit protein uS15 from Prochlorococcus marinus subsp. pastoris (strain CCMP1986 / NIES-2087 / MED4).